The sequence spans 255 residues: Protein DOG1-like 2 (255 aa).

Residues 10–246 form the DOG1 domain; that stretch reads EKLQKRCYHE…HDRGRVRADV (237 aa).

The sequence is that of Protein DOG1-like 2 from Arabidopsis thaliana (Mouse-ear cress).